The primary structure comprises 316 residues: Ribosomal RNA small subunit methyltransferase H (316 aa).

Residues 37–39, D56, F83, D106, and H113 contribute to the S-adenosyl-L-methionine site; that span reads GGH. Positions 276–316 are disordered; that stretch reads PILPSEEETKENPASRSAKLRVLRKTKSADKKYKKENSKEE. The segment covering 302–316 has biased composition (basic and acidic residues); that stretch reads KSADKKYKKENSKEE.

This sequence belongs to the methyltransferase superfamily. RsmH family.

It localises to the cytoplasm. It carries out the reaction cytidine(1402) in 16S rRNA + S-adenosyl-L-methionine = N(4)-methylcytidine(1402) in 16S rRNA + S-adenosyl-L-homocysteine + H(+). Its function is as follows. Specifically methylates the N4 position of cytidine in position 1402 (C1402) of 16S rRNA. The protein is Ribosomal RNA small subunit methyltransferase H of Leptospira borgpetersenii serovar Hardjo-bovis (strain JB197).